Consider the following 323-residue polypeptide: Transcription factor LUX (323 aa).

Disordered regions lie at residues 1–25, 53–139, and 267–298; these read MGEE…WEMG, ERSR…DLSG, and GYHH…ESNP. Over residues 65–87 the composition is skewed to low complexity; that stretch reads SETTLSSLRGGSSGPNTSSSNNN. A DNA-binding region (myb-like GARP) is located at residues 139–200; that stretch reads GKTLKRPRLV…HLQKYRLYLK (62 aa).

As to quaternary structure, interacts with ELF3 and forms a complex with ELF3 and ELF4.

The protein resides in the nucleus. In terms of biological role, transcription factor that is essential for the generation of the circadian clock oscillation. Is necessary for activation of CCA1 and LHY expression. Is coregulated with TOC1 and seems to be repressed by CCA1 and LHY by direct binding of these proteins to the evening element in the LUX promoter. Directly regulates the expression of PRR9, a major component of the morning transcriptional feedback circuit, by binding specific sites on PRR9 promoter. Binds to its own promoter, inducing a negative auto-regulatory feedback loop within the core clock. Binds to ELF3 and associates with ELF4 in a diurnal complex which is required for the expression of the growth-promoting transcription factors PIF4 and PIF5 and subsequent hypocotyl growth in the early evening. The sequence is that of Transcription factor LUX (LUX) from Arabidopsis thaliana (Mouse-ear cress).